Reading from the N-terminus, the 154-residue chain is SsrA-binding protein (154 aa).

The disordered stretch occupies residues 134–154 (DKREDIKKRDQERELSRRFKN).

Belongs to the SmpB family.

It is found in the cytoplasm. Functionally, required for rescue of stalled ribosomes mediated by trans-translation. Binds to transfer-messenger RNA (tmRNA), required for stable association of tmRNA with ribosomes. tmRNA and SmpB together mimic tRNA shape, replacing the anticodon stem-loop with SmpB. tmRNA is encoded by the ssrA gene; the 2 termini fold to resemble tRNA(Ala) and it encodes a 'tag peptide', a short internal open reading frame. During trans-translation Ala-aminoacylated tmRNA acts like a tRNA, entering the A-site of stalled ribosomes, displacing the stalled mRNA. The ribosome then switches to translate the ORF on the tmRNA; the nascent peptide is terminated with the 'tag peptide' encoded by the tmRNA and targeted for degradation. The ribosome is freed to recommence translation, which seems to be the essential function of trans-translation. In Leuconostoc mesenteroides subsp. mesenteroides (strain ATCC 8293 / DSM 20343 / BCRC 11652 / CCM 1803 / JCM 6124 / NCDO 523 / NBRC 100496 / NCIMB 8023 / NCTC 12954 / NRRL B-1118 / 37Y), this protein is SsrA-binding protein.